The following is a 1342-amino-acid chain: DNA-directed RNA polymerase subunit beta (1342 aa).

The protein belongs to the RNA polymerase beta chain family. As to quaternary structure, the RNAP catalytic core consists of 2 alpha, 1 beta, 1 beta' and 1 omega subunit. When a sigma factor is associated with the core the holoenzyme is formed, which can initiate transcription.

The catalysed reaction is RNA(n) + a ribonucleoside 5'-triphosphate = RNA(n+1) + diphosphate. In terms of biological role, DNA-dependent RNA polymerase catalyzes the transcription of DNA into RNA using the four ribonucleoside triphosphates as substrates. The protein is DNA-directed RNA polymerase subunit beta of Vibrio vulnificus (strain CMCP6).